Consider the following 499-residue polypeptide: Pentatricopeptide repeat-containing protein PPR5, chloroplastic (499 aa).

Low complexity predominate over residues 1–12 (MLACPSTSSPWP). The tract at residues 1–28 (MLACPSTSSPWPQRQPPSPCPGGGGGAT) is disordered. The transit peptide at 1 to 45 (MLACPSTSSPWPQRQPPSPCPGGGGGATRHVALAARSKRRGAGPA) directs the protein to the chloroplast. 9 PPR repeats span residues 123 to 157 (DNGI…GCKP), 158 to 193 (DTSV…KCIE), 198 to 232 (TIVT…VVSP), 233 to 267 (DVYT…QCRP), 268 to 302 (DVIT…KERP), 303 to 337 (THPT…GFKP), 338 to 372 (NYVT…QTKV), 373 to 407 (HLSS…CVVP), and 408 to 442 (NGST…GIVP). Residues 458 to 499 (DRKPRTSPGINSASKPSTDSAGDSETATSDKPEVSVWHVAAT) form a disordered region. Polar residues predominate over residues 465–484 (PGINSASKPSTDSAGDSETA).

This sequence belongs to the PPR family. P subfamily.

It localises to the plastid. The protein resides in the chloroplast. In terms of biological role, involved in the biogenesis of the plastid translation machinery by promoting the splicing of group II introns in chloroplasts. Stabilizes the chloroplast trnG pre-RNA by directly binding to a group II intron, where it protects an endonuclease-sensitive site and stimulates splicing. Binds specific sites within group II intron trnG pre-RNA. Binds with high affinity to the 5'-UTR of the chloroplastic petA mRNA. The sequence is that of Pentatricopeptide repeat-containing protein PPR5, chloroplastic from Zea mays (Maize).